A 131-amino-acid chain; its full sequence is Small ribosomal subunit protein uS8 (131 aa).

The protein belongs to the universal ribosomal protein uS8 family. In terms of assembly, part of the 30S ribosomal subunit. Contacts proteins S5 and S12.

Functionally, one of the primary rRNA binding proteins, it binds directly to 16S rRNA central domain where it helps coordinate assembly of the platform of the 30S subunit. The sequence is that of Small ribosomal subunit protein uS8 from Zymomonas mobilis subsp. mobilis (strain ATCC 31821 / ZM4 / CP4).